The following is a 360-amino-acid chain: MFVDSVEIIIASGKGGPGMVSFRREKFVIKGGPDGGDGGDGGDVYFEVDNNTDTLASFRGTKHHKAKNGAPGGTRNCTGKKGEDKIIIVPPGTQVFADGALWLDLITPKERVLALKGGKGGLGNAHFKSATKQQPTYAQKGLEGVEKCVRLELKLIADIGLVGFPNAGKSTLISTISNAKPKIAHYEFTTLVPNLGVVSVDEKSGFLMADIPGIIEGASEGKGLGISFLKHIERTKVLAFVLDASRLDLGIKEQYKRLRLELEKFSPALANKPFGVLLNKCDVAEDIDTMTKDFCTFLNLKVQKLEAFDLEPYLGFLHPKLMGNFEKDLNEKSALFILPLSAVSALNTHALKFVLLEALP.

The Obg domain occupies 1–156; it reads MFVDSVEIII…KCVRLELKLI (156 aa). Residues 157–360 enclose the OBG-type G domain; it reads ADIGLVGFPN…LKFVLLEALP (204 aa). GTP is bound by residues 163–170, 188–192, 210–213, 279–282, and 341–343; these read GFPNAGKS, FTTLV, DIPG, NKCD, and SAV. Residues serine 170 and threonine 190 each contribute to the Mg(2+) site.

Belongs to the TRAFAC class OBG-HflX-like GTPase superfamily. OBG GTPase family. As to quaternary structure, monomer. The cofactor is Mg(2+).

Its subcellular location is the cytoplasm. In terms of biological role, an essential GTPase which binds GTP, GDP and possibly (p)ppGpp with moderate affinity, with high nucleotide exchange rates and a fairly low GTP hydrolysis rate. Plays a role in control of the cell cycle, stress response, ribosome biogenesis and in those bacteria that undergo differentiation, in morphogenesis control. This is GTPase Obg from Helicobacter acinonychis (strain Sheeba).